Here is a 224-residue protein sequence, read N- to C-terminus: Phosphoribosylformylglycinamidine synthase subunit PurQ (224 aa).

Residues 2-224 enclose the Glutamine amidotransferase type-1 domain; it reads TVAVVRFGGS…DGQGILGAFA (223 aa). Catalysis depends on Cys-85, which acts as the Nucleophile. Catalysis depends on residues His-202 and Glu-204.

As to quaternary structure, part of the FGAM synthase complex composed of 1 PurL, 1 PurQ and 2 PurS subunits.

It localises to the cytoplasm. It carries out the reaction N(2)-formyl-N(1)-(5-phospho-beta-D-ribosyl)glycinamide + L-glutamine + ATP + H2O = 2-formamido-N(1)-(5-O-phospho-beta-D-ribosyl)acetamidine + L-glutamate + ADP + phosphate + H(+). It catalyses the reaction L-glutamine + H2O = L-glutamate + NH4(+). It functions in the pathway purine metabolism; IMP biosynthesis via de novo pathway; 5-amino-1-(5-phospho-D-ribosyl)imidazole from N(2)-formyl-N(1)-(5-phospho-D-ribosyl)glycinamide: step 1/2. Its function is as follows. Part of the phosphoribosylformylglycinamidine synthase complex involved in the purines biosynthetic pathway. Catalyzes the ATP-dependent conversion of formylglycinamide ribonucleotide (FGAR) and glutamine to yield formylglycinamidine ribonucleotide (FGAM) and glutamate. The FGAM synthase complex is composed of three subunits. PurQ produces an ammonia molecule by converting glutamine to glutamate. PurL transfers the ammonia molecule to FGAR to form FGAM in an ATP-dependent manner. PurS interacts with PurQ and PurL and is thought to assist in the transfer of the ammonia molecule from PurQ to PurL. The protein is Phosphoribosylformylglycinamidine synthase subunit PurQ of Halobacterium salinarum (strain ATCC 700922 / JCM 11081 / NRC-1) (Halobacterium halobium).